Here is a 313-residue protein sequence, read N- to C-terminus: Putative HTH-type transcriptional regulatory protein Msm_0453 (313 aa).

The HTH cro/C1-type domain occupies 131 to 189 (IKQYREEYSLSLKDLADLAHVSRATMYKYENEIVRANTETAMILEEILNTKVTLDIDLL). The H-T-H motif DNA-binding region spans 142 to 161 (LKDLADLAHVSRATMYKYEN).

This chain is Putative HTH-type transcriptional regulatory protein Msm_0453, found in Methanobrevibacter smithii (strain ATCC 35061 / DSM 861 / OCM 144 / PS).